Consider the following 106-residue polypeptide: BLOC-1-related complex subunit 7 (106 aa).

It belongs to the BORCS7 family. In terms of assembly, component of the BLOC-one-related complex (BORC) which is composed of BLOC1S1, BLOC1S2, BORCS5, BORCS6, BORCS7, BORCS8, KXD1 and SNAPIN.

The protein resides in the lysosome membrane. As part of the BORC complex may play a role in lysosomes movement and localization at the cell periphery. Associated with the cytosolic face of lysosomes, the BORC complex may recruit ARL8B and couple lysosomes to microtubule plus-end-directed kinesin motor. The chain is BLOC-1-related complex subunit 7 from Homo sapiens (Human).